We begin with the raw amino-acid sequence, 395 residues long: L-lactate dehydrogenase (395 aa).

The region spanning 1–380 is the FMN hydroxy acid dehydrogenase domain; sequence MIISAASDYR…SKDSLVQELS (380 aa). Tyr-24 contacts substrate. FMN contacts are provided by Ser-106 and Gln-127. Tyr-129 contacts substrate. An FMN-binding site is contributed by Thr-155. Arg-164 lines the substrate pocket. Lys-251 serves as a coordination point for FMN. Residue His-275 is the Proton acceptor of the active site. Arg-278 provides a ligand contact to substrate. 306–330 is a binding site for FMN; the sequence is DSGIRNGLDVVRMIALGADSVLLGR.

Belongs to the FMN-dependent alpha-hydroxy acid dehydrogenase family. FMN is required as a cofactor.

The protein localises to the cell inner membrane. It carries out the reaction (S)-lactate + A = pyruvate + AH2. In terms of biological role, catalyzes the conversion of L-lactate to pyruvate. Is coupled to the respiratory chain. In Enterobacter sp. (strain 638), this protein is L-lactate dehydrogenase.